The chain runs to 339 residues: tRNA dimethylallyltransferase (339 aa).

An ATP-binding site is contributed by Gly-36–Thr-43. Thr-38–Thr-43 is a substrate binding site. The interval Asp-61–Gln-64 is interaction with substrate tRNA.

Belongs to the IPP transferase family. As to quaternary structure, monomer. Requires Mg(2+) as cofactor.

It catalyses the reaction adenosine(37) in tRNA + dimethylallyl diphosphate = N(6)-dimethylallyladenosine(37) in tRNA + diphosphate. Functionally, catalyzes the transfer of a dimethylallyl group onto the adenine at position 37 in tRNAs that read codons beginning with uridine, leading to the formation of N6-(dimethylallyl)adenosine (i(6)A). This Chlamydia trachomatis serovar L2 (strain ATCC VR-902B / DSM 19102 / 434/Bu) protein is tRNA dimethylallyltransferase.